Here is a 381-residue protein sequence, read N- to C-terminus: Subtilisin amylosacchariticus (381 aa).

An N-terminal signal peptide occupies residues 1–29 (MRSKKLWISLLFALTLIFTMAFSNMSAQA). Positions 30 to 106 (AGKSSTEKKY…VEEDHIAHEY (77 aa)) are excised as a propeptide. In terms of domain architecture, Inhibitor I9 spans 38–103 (KYIVGFKQTM…VAYVEEDHIA (66 aa)). Gln108 contributes to the Ca(2+) binding site. A Peptidase S8 domain is found at 111 to 380 (PYGISQIKAP…KGLINVQAAA (270 aa)). Residue Asp138 is the Charge relay system of the active site. Asp147 lines the Ca(2+) pocket. His170 serves as the catalytic Charge relay system. Residues Leu181, Asn183, Ile185, Val187, Ala275, Tyr277, and Thr280 each coordinate Ca(2+). The Charge relay system role is filled by Ser327.

It belongs to the peptidase S8 family. Ca(2+) serves as cofactor.

The protein localises to the secreted. The catalysed reaction is Hydrolysis of proteins with broad specificity for peptide bonds, and a preference for a large uncharged residue in P1. Hydrolyzes peptide amides.. Functionally, subtilisin is an extracellular alkaline serine protease, it catalyzes the hydrolysis of proteins and peptide amides. The chain is Subtilisin amylosacchariticus (apr) from Bacillus subtilis subsp. amylosacchariticus.